Here is an 860-residue protein sequence, read N- to C-terminus: Photoactivated adenylate cyclase subunit beta (860 aa).

Positions 56–149 constitute a BLUF 1 domain; the sequence is LRRLMYLSKS…GRMYGDWHMK (94 aa). The Guanylate cyclase 1 domain occupies 205–333; it reads VVTFIYLVEF…DCINTTSRIA (129 aa). The disordered stretch occupies residues 420–443; the sequence is RPPIFDDTPKGKPRPRTPGYGGRQ. The BLUF 2 domain occupies 471-563; the sequence is LTTLTYISQA…RAYPAEWTLT (93 aa). Residues 619 to 748 form the Guanylate cyclase 2 domain; it reads VMLATDICSF…AVSARVMEVE (130 aa). The segment at 819–860 is disordered; the sequence is KPLALEPEEAKQDYRVSPGRMRHGDSGRRSNSAQGKRSTQVR. The span at 847–860 shows a compositional bias: polar residues; the sequence is RSNSAQGKRSTQVR.

It belongs to the adenylyl cyclase class-4/guanylyl cyclase family. As to quaternary structure, heterotetramer of two alpha and two beta subunits. FAD is required as a cofactor.

It localises to the cell projection. The protein localises to the cilium. Its subcellular location is the flagellum. The catalysed reaction is ATP = 3',5'-cyclic AMP + diphosphate. Acts as a photoreceptor for the step-up photophobic response. This is Photoactivated adenylate cyclase subunit beta from Euglena longa (Euglenophycean alga).